The primary structure comprises 193 residues: Acyl-homoserine-lactone synthase (193 aa).

This sequence belongs to the autoinducer synthase family.

The enzyme catalyses a fatty acyl-[ACP] + S-adenosyl-L-methionine = an N-acyl-L-homoserine lactone + S-methyl-5'-thioadenosine + holo-[ACP] + H(+). Its function is as follows. Required for the synthesis of OHHL (N-(3-oxohexanoyl)-L-homoserine lactone) also known as VAI or N-(beta-ketocaproyl)homoserine lactone or 3-oxo-N-(tetrahydro-2-oxo-3-furanyl)-hexanamide, an autoinducer molecule which binds to LuxR and thus acts in bioluminescence regulation. The polypeptide is Acyl-homoserine-lactone synthase (luxI) (Aliivibrio fischeri (Vibrio fischeri)).